The primary structure comprises 440 residues: Phosphatidylcholine-sterol acyltransferase (440 aa).

A signal peptide spans 1-24; sequence MGPPGSPWQWVTLLLGLLLPPAAP. An N-linked (GlcNAc...) (complex) asparagine glycan is attached at N44. A disulfide bridge links C74 with C98. N-linked (GlcNAc...) (complex) asparagine glycosylation is present at N108. S205 functions as the Nucleophile in the catalytic mechanism. An N-linked (GlcNAc...) (complex) asparagine glycan is attached at N296. C337 and C380 are oxidised to a cystine. Catalysis depends on charge relay system residues D369 and H401. N408 carries an N-linked (GlcNAc...) (complex) asparagine glycan. T431 is a glycosylation site (O-linked (GalNAc...) threonine). The O-linked (GalNAc...) serine glycan is linked to S433.

The protein belongs to the AB hydrolase superfamily. Lipase family. O- and N-glycosylated. O-glycosylation on Thr-431 and Ser-433 consists of sialylated galactose beta 1--&gt;3N-acetylgalactosamine structures. N-glycosylated sites contain sialylated triantennary and/or biantennary complex structures. In terms of tissue distribution, detected in blood plasma. Detected in cerebral spinal fluid (at protein level). Detected in liver. Expressed mainly in brain, liver and testes.

It is found in the secreted. The enzyme catalyses a sterol + a 1,2-diacyl-sn-glycero-3-phosphocholine = a sterol ester + a 1-acyl-sn-glycero-3-phosphocholine. It catalyses the reaction a 1-O-alkyl-2-acetyl-sn-glycero-3-phosphocholine + H2O = a 1-O-alkyl-sn-glycero-3-phosphocholine + acetate + H(+). It carries out the reaction a 1-hexadecanoyl-2-acyl-sn-glycero-3-phosphocholine + (24S)-hydroxycholesterol = (24S)-24-hydroxycholesterol ester + 1-hexadecanoyl-sn-glycero-3-phosphocholine. The catalysed reaction is (24S)-hydroxycholesterol + 1-hexadecanoyl-2-(9Z,12Z-octadecadienoyl)-sn-glycero-3-phosphocholine = (24S)-hydroxycholesterol 3-linoleoate + 1-hexadecanoyl-sn-glycero-3-phosphocholine. The enzyme catalyses 1-hexadecanoyl-2-(5Z,8Z,11Z,14Z-eicosatetraenoyl)-sn-glycero-3-phosphocholine + cholesterol = cholesteryl (5Z,8Z,11Z,14Z)-eicosatetraenoate + 1-hexadecanoyl-sn-glycero-3-phosphocholine. It catalyses the reaction 1-hexadecanoyl-2-(9Z-octadecenoyl)-sn-glycero-3-phosphocholine + cholesterol = cholesteryl (9Z-octadecenoate) + 1-hexadecanoyl-sn-glycero-3-phosphocholine. It carries out the reaction 1-hexadecanoyl-2-(8Z,11Z,14Z-eicosatrienoyl)-sn-glycero-3-phosphocholine + cholesterol = cholesteryl (8Z,11Z,14Z)-eicosatrienoate + 1-hexadecanoyl-sn-glycero-3-phosphocholine. The catalysed reaction is 1-hexadecanoyl-2-(5Z,8Z,11Z-eicosatrienoyl)-sn-glycero-3-phosphocholine + cholesterol = cholesteryl (5Z,8Z,11Z)-eicosatrienoate + 1-hexadecanoyl-sn-glycero-3-phosphocholine. The enzyme catalyses 1-hexadecanoyl-2-(5Z,8Z,11Z,14Z,17Z-eicosapentaenoyl)-sn-glycero-3-phosphocholine + cholesterol = (5Z,8Z,11Z,14Z,17Z-eicosapentaenoyl)-cholesterol + 1-hexadecanoyl-sn-glycero-3-phosphocholine. It catalyses the reaction 1-hexadecanoyl-2-(9Z,12Z-octadecadienoyl)-sn-glycero-3-phosphocholine + cholesterol = cholesteryl (9Z,12Z)-octadecadienoate + 1-hexadecanoyl-sn-glycero-3-phosphocholine. It carries out the reaction 1-hexadecanoyl-2-(6Z,9Z,12Z-octadecatrienoyl)-sn-glycero-3-phosphocholine + cholesterol = (6Z,9Z,12Z-octadecatrienoyl)-cholesterol + 1-hexadecanoyl-sn-glycero-3-phosphocholine. The catalysed reaction is 1-hexadecanoyl-2-(11Z,14Z,17Z-eicosatrienoyl)-sn-glycero-3-phosphocholine + cholesterol = (11Z,14Z,17Z-eicosatrienoyl)-cholesterol + 1-hexadecanoyl-sn-glycero-3-phosphocholine. The enzyme catalyses 1-hexadecanoyl-2-(9Z,12Z,15Z-octadecatrienoyl)-sn-glycero-3-phosphocholine + cholesterol = (9Z,12Z,15Z-octadecatrienoyl)-cholesterol + 1-hexadecanoyl-sn-glycero-3-phosphocholine. It catalyses the reaction 1-hexadecanoyl-2-(9Z,12Z-octadecadienoyl)-sn-glycero-3-phosphocholine + H2O = (9Z,12Z)-octadecadienoate + 1-hexadecanoyl-sn-glycero-3-phosphocholine + H(+). It carries out the reaction 1-hexadecanoyl-2-(5Z,8Z,11Z,14Z-eicosatetraenoyl)-sn-glycero-3-phosphocholine + H2O = 1-hexadecanoyl-sn-glycero-3-phosphocholine + (5Z,8Z,11Z,14Z)-eicosatetraenoate + H(+). The catalysed reaction is a 1-O-alkyl-2-acetyl-sn-glycero-3-phosphocholine + 1-hexadecanoyl-sn-glycero-3-phosphocholine = 1-hexadecanoyl-2-acetyl-sn-glycero-3-phosphocholine + a 1-O-alkyl-sn-glycero-3-phosphocholine. Its activity is regulated as follows. APOA1 is the most potent activator in plasma. Also activated by APOE, APOC1 and APOA4. Inhibited by haptoglobin and 5,5'-dithiobis-(2-nitrobenzoic acid) (DTNB). Central enzyme in the extracellular metabolism of plasma lipoproteins. Synthesized mainly in the liver and secreted into plasma where it converts cholesterol and phosphatidylcholines (lecithins) to cholesteryl esters and lysophosphatidylcholines on the surface of high and low density lipoproteins (HDLs and LDLs). The cholesterol ester is then transported back to the liver. Has a preference for plasma 16:0-18:2 or 18:O-18:2 phosphatidylcholines. Also produced in the brain by primary astrocytes, and esterifies free cholesterol on nascent APOE-containing lipoproteins secreted from glia and influences cerebral spinal fluid (CSF) APOE- and APOA1 levels. Together with APOE and the cholesterol transporter ABCA1, plays a key role in the maturation of glial-derived, nascent lipoproteins. Required for remodeling high-density lipoprotein particles into their spherical forms. Catalyzes the hydrolysis of 1-O-alkyl-2-acetyl-sn-glycero-3-phosphocholine (platelet-activating factor or PAF) to 1-O-alkyl-sn-glycero-3-phosphocholine (lyso-PAF). Also catalyzes the transfer of the acetate group from PAF to 1-hexadecanoyl-sn-glycero-3-phosphocholine forming lyso-PAF. Catalyzes the esterification of (24S)-hydroxycholesterol (24(S)OH-C), also known as cerebrosterol to produce 24(S)OH-C monoesters. The polypeptide is Phosphatidylcholine-sterol acyltransferase (LCAT) (Homo sapiens (Human)).